Here is a 146-residue protein sequence, read N- to C-terminus: Hemoglobin subunit beta (146 aa).

The residue at position 1 (V1) is an N-acetylvaline. The region spanning H2–H146 is the Globin domain. Position 59 is an N6-acetyllysine (K59). H63 lines the heme b pocket. Residue K82 is modified to N6-acetyllysine. H92 provides a ligand contact to heme b. C93 carries the post-translational modification S-nitrosocysteine. Residue K144 is modified to N6-acetyllysine.

It belongs to the globin family. In terms of assembly, heterotetramer of two alpha chains and two beta chains. In terms of tissue distribution, red blood cells.

Functionally, involved in oxygen transport from the lung to the various peripheral tissues. The chain is Hemoglobin subunit beta (HBB) from Ondatra zibethicus (Muskrat).